The sequence spans 120 residues: Hydrogenase maturation factor HypA (120 aa).

His-2 serves as a coordination point for Ni(2+). 4 residues coordinate Zn(2+): Cys-73, His-76, Cys-89, and Cys-92.

The protein belongs to the HypA/HybF family.

Its function is as follows. Involved in the maturation of [NiFe] hydrogenases. Required for nickel insertion into the metal center of the hydrogenase. This is Hydrogenase maturation factor HypA from Deinococcus radiodurans (strain ATCC 13939 / DSM 20539 / JCM 16871 / CCUG 27074 / LMG 4051 / NBRC 15346 / NCIMB 9279 / VKM B-1422 / R1).